Reading from the N-terminus, the 217-residue chain is Cytochrome b5 domain-containing protein 1 (217 aa).

The 67-residue stretch at 6–72 (PRFYTPREVS…NPKTGDVKTH (67 aa)) folds into the Cytochrome b5 heme-binding domain. The heme site is built by histidine 41 and histidine 72.

The protein belongs to the cytochrome b5 family.

It is found in the cytoplasm. Its subcellular location is the cytoskeleton. The protein resides in the cilium axoneme. Functionally, radial spoke stalk protein that binds heme under oxidizing conditions. Required for the coordinated beating of multiple cilia maybe by functioning in a redox signaling pathway. This chain is Cytochrome b5 domain-containing protein 1 (cyb5d1), found in Xenopus tropicalis (Western clawed frog).